Here is a 333-residue protein sequence, read N- to C-terminus: Probable tRNA pseudouridine synthase B (333 aa).

D66 (nucleophile) is an active-site residue. Residues 233 to 308 (LKKIIVKDSA…EVVEITRVIM (76 aa)) form the PUA domain.

The protein belongs to the pseudouridine synthase TruB family. Type 2 subfamily.

It catalyses the reaction uridine(55) in tRNA = pseudouridine(55) in tRNA. Functionally, could be responsible for synthesis of pseudouridine from uracil-55 in the psi GC loop of transfer RNAs. The chain is Probable tRNA pseudouridine synthase B from Methanococcus maripaludis (strain C5 / ATCC BAA-1333).